The chain runs to 261 residues: 14-3-3-like protein GF14-12 (261 aa).

The protein belongs to the 14-3-3 family.

Functionally, is associated with a DNA binding complex to bind to the G box, a well-characterized cis-acting DNA regulatory element found in plant genes. The protein is 14-3-3-like protein GF14-12 (GRF2) of Zea mays (Maize).